A 740-amino-acid chain; its full sequence is NAD(P)H-quinone oxidoreductase subunit 5, chloroplastic (740 aa).

Transmembrane regions (helical) follow at residues 9–29 (WIIP…LILF), 40–60 (WAFQ…YLSI), 89–109 (IDPL…MVLI), 125–145 (FAYM…SNLI), 147–167 (IYIF…FWFT), 185–205 (GDFG…SFEF), 219–239 (NEVN…GAVS), 258–278 (TPIS…FLVA), 286–306 (VIPY…LLGA), 327–347 (LGYM…FHLI), 354–374 (ALLF…VGYS), 396–416 (ITFL…CFWS), 425–445 (WLYS…TAFY), 543–563 (LFPI…GIPF), 602–622 (VVSV…YKPV), and 717–737 (SYLF…YLLF).

It belongs to the complex I subunit 5 family. As to quaternary structure, NDH is composed of at least 16 different subunits, 5 of which are encoded in the nucleus.

It is found in the plastid. Its subcellular location is the chloroplast thylakoid membrane. The catalysed reaction is a plastoquinone + NADH + (n+1) H(+)(in) = a plastoquinol + NAD(+) + n H(+)(out). The enzyme catalyses a plastoquinone + NADPH + (n+1) H(+)(in) = a plastoquinol + NADP(+) + n H(+)(out). Functionally, NDH shuttles electrons from NAD(P)H:plastoquinone, via FMN and iron-sulfur (Fe-S) centers, to quinones in the photosynthetic chain and possibly in a chloroplast respiratory chain. The immediate electron acceptor for the enzyme in this species is believed to be plastoquinone. Couples the redox reaction to proton translocation, and thus conserves the redox energy in a proton gradient. This is NAD(P)H-quinone oxidoreductase subunit 5, chloroplastic (ndhF) from Solanum bulbocastanum (Wild potato).